The sequence spans 473 residues: Hyaluronidase-2 (473 aa).

The N-terminal stretch at 1–20 is a signal peptide; it reads MWTGLGPAVTLALVLVVAWA. Disulfide bonds link Cys47–Cys343 and Cys214–Cys230. N-linked (GlcNAc...) asparagine glycans are attached at residues Asn77 and Asn106. Glu138 functions as the Proton donor in the catalytic mechanism. Asn340 and Asn360 each carry an N-linked (GlcNAc...) asparagine glycan. Residues 364–442 form the EGF-like domain; it reads AAQYCSWAQC…YLGWGGEQCQ (79 aa). Cystine bridges form between Cys368-Cys379, Cys373-Cys430, and Cys432-Cys441. A lipid anchor (GPI-anchor amidated glycine) is attached at Gly451. Residues 452–473 constitute a propeptide, removed in mature form; that stretch reads ASGAWAGSHLTGLLAVAVLAFT.

This sequence belongs to the glycosyl hydrolase 56 family. Interacts with MST1R.

The protein resides in the cell membrane. The enzyme catalyses Random hydrolysis of (1-&gt;4)-linkages between N-acetyl-beta-D-glucosamine and D-glucuronate residues in hyaluronate.. Functionally, catalyzes hyaluronan degradation into small fragments that are endocytosed and degraded in lysosomes by HYAL1 and exoglycosidases. Essential for the breakdown of extracellular matrix hyaluronan. The chain is Hyaluronidase-2 (HYAL2) from Bos taurus (Bovine).